The primary structure comprises 352 residues: WAT1-related protein At1g11450 (352 aa).

Helical transmembrane passes span 14-34 (WPPMIVMVTSQVAMGSVNALV), 46-66 (IIGAYRMAISSFILVPIAYFL), 83-103 (FISGLLGASLMQFFYLLGLSY), 107-127 (TVACALVSLMPAITFAFALIL), 139-159 (AGMIKVMGTLICISGALFLTF), 187-207 (WLLGCLYLVIGIVLLSLWILF), 219-239 (FSSTCLMSIFAAFQCALLSLY), 253-273 (FVIGVIIYAGVIGQAMSTVAA), 283-303 (VFASAIMPVSLISATLFDFLI), and 308-328 (LYLGSVIGSVGTIIGLYVFLW). 2 EamA domains span residues 27–157 (MGSV…ALFL) and 192–335 (LYLV…KETE).

It belongs to the drug/metabolite transporter (DMT) superfamily. Plant drug/metabolite exporter (P-DME) (TC 2.A.7.4) family.

It is found in the membrane. This chain is WAT1-related protein At1g11450, found in Arabidopsis thaliana (Mouse-ear cress).